The following is a 393-amino-acid chain: tRNA(Met) cytidine acetate ligase (393 aa).

The ATP site is built by Gly81, Asn142, and Arg167.

It belongs to the TmcAL family.

It is found in the cytoplasm. It catalyses the reaction cytidine(34) in elongator tRNA(Met) + acetate + ATP = N(4)-acetylcytidine(34) in elongator tRNA(Met) + AMP + diphosphate. Its function is as follows. Catalyzes the formation of N(4)-acetylcytidine (ac(4)C) at the wobble position of elongator tRNA(Met), using acetate and ATP as substrates. First activates an acetate ion to form acetyladenylate (Ac-AMP) and then transfers the acetyl group to tRNA to form ac(4)C34. This is tRNA(Met) cytidine acetate ligase from Bacillus cereus (strain Q1).